We begin with the raw amino-acid sequence, 885 residues long: Protein arg11, mitochondrial (885 aa).

A mitochondrion-targeting transit peptide spans 1–59 (MLIELQQIVKSGLVRNGAKHCTKRSLLCSNASVIASKRFQGSFAPGQQQPLNPLAKPIE). One can recognise an N-acetyltransferase domain in the interval 346-499 (FVINKHDSLD…SDKPFADAII (154 aa)). Residues 503–523 (STKPPTASSTTNNPSSSQINQ) are compositionally biased toward low complexity. The segment at 503 to 532 (STKPPTASSTTNNPSSSQINQKRSYSTSSL) is disordered. C703 is a catalytic residue.

This sequence in the N-terminal section; belongs to the acetylglutamate kinase family. The protein in the C-terminal section; belongs to the NAGSA dehydrogenase family. Post-translationally, the protein precursor is probably cleaved into the two biologically active enzymes, the kinase and the reductase.

It localises to the mitochondrion. It carries out the reaction N-acetyl-L-glutamate 5-semialdehyde + phosphate + NADP(+) = N-acetyl-L-glutamyl 5-phosphate + NADPH + H(+). It catalyses the reaction N-acetyl-L-glutamate + ATP = N-acetyl-L-glutamyl 5-phosphate + ADP. It participates in amino-acid biosynthesis; L-arginine biosynthesis; N(2)-acetyl-L-ornithine from L-glutamate: step 2/4. Its pathway is amino-acid biosynthesis; L-arginine biosynthesis; N(2)-acetyl-L-ornithine from L-glutamate: step 3/4. Its activity is regulated as follows. The kinase activity is inhibited by arginine. The chain is Protein arg11, mitochondrial (arg11) from Schizosaccharomyces pombe (strain 972 / ATCC 24843) (Fission yeast).